A 124-amino-acid polypeptide reads, in one-letter code: MNNVLFVALGGSIGAVLRYLISILMLQVFGSGFPFGTLMVNILGSFLMGVVYALGQVSEVSPEIKAFIGVGMLGALTTFSTFSNESLLLMQEGYLVKAILNVVVNVGVCIFVVYLGQQLVFSRY.

4 helical membrane-spanning segments follow: residues 5-27, 42-62, 63-83, and 95-115; these read LFVALGGSIGAVLRYLISILMLQ, ILGSFLMGVVYALGQVSEVSP, EIKAFIGVGMLGALTTFSTFS, and LVKAILNVVVNVGVCIFVVYL. Na(+) contacts are provided by G74 and T77.

This sequence belongs to the fluoride channel Fluc/FEX (TC 1.A.43) family.

Its subcellular location is the cell inner membrane. It catalyses the reaction fluoride(in) = fluoride(out). With respect to regulation, na(+) is not transported, but it plays an essential structural role and its presence is essential for fluoride channel function. Functionally, fluoride-specific ion channel. Important for reducing fluoride concentration in the cell, thus reducing its toxicity. This is Fluoride-specific ion channel FluC from Shewanella piezotolerans (strain WP3 / JCM 13877).